Here is a 493-residue protein sequence, read N- to C-terminus: Alcohol-forming fatty acyl-CoA reductase (493 aa).

This sequence belongs to the fatty acyl-CoA reductase family.

The enzyme catalyses a long-chain fatty acyl-CoA + 2 NADPH + 2 H(+) = a long-chain primary fatty alcohol + 2 NADP(+) + CoA. In terms of biological role, NADPH-dependent alcohol-forming fatty acyl-coenzyme A reductase that catalyzes the reduction of fatty acyl-CoA to fatty alcohols. The recombinant enzyme accepts saturated and mono-unsaturated fatty acyl-CoAs of 16 to 22 carbons. The polypeptide is Alcohol-forming fatty acyl-CoA reductase (Simmondsia chinensis (Jojoba)).